We begin with the raw amino-acid sequence, 807 residues long: 1,4-alpha-glucan branching enzyme GlgB (807 aa).

The active-site Nucleophile is D405. The active-site Proton donor is E458.

It belongs to the glycosyl hydrolase 13 family. GlgB subfamily. Monomer.

It carries out the reaction Transfers a segment of a (1-&gt;4)-alpha-D-glucan chain to a primary hydroxy group in a similar glucan chain.. The protein operates within glycan biosynthesis; glycogen biosynthesis. In terms of biological role, catalyzes the formation of the alpha-1,6-glucosidic linkages in glycogen by scission of a 1,4-alpha-linked oligosaccharide from growing alpha-1,4-glucan chains and the subsequent attachment of the oligosaccharide to the alpha-1,6 position. The protein is 1,4-alpha-glucan branching enzyme GlgB of Histophilus somni (strain 129Pt) (Haemophilus somnus).